We begin with the raw amino-acid sequence, 90 residues long: UPF0237 protein NMB1653 (90 aa).

The ACT domain occupies 5–83 (VITVIGKDRV…LDIRMQNEEI (79 aa)).

Belongs to the UPF0237 family.

The polypeptide is UPF0237 protein NMB1653 (Neisseria meningitidis serogroup B (strain ATCC BAA-335 / MC58)).